We begin with the raw amino-acid sequence, 202 residues long: Holliday junction branch migration complex subunit RuvA (202 aa).

The domain I stretch occupies residues 1–65 (MIAYVEGRVA…EDALELFGFS (65 aa)). The segment at 66-144 (TWDERQTFMV…VEDLPAGLVL (79 aa)) is domain II. Positions 145 to 155 (AGGAAPGGVFR) are flexible linker. The domain III stretch occupies residues 155 to 202 (RDALAGLGNLGYLEDEAAPVLKEVLKAEPDLDVAGALRAALKALARGR).

This sequence belongs to the RuvA family. Homotetramer. Forms an RuvA(8)-RuvB(12)-Holliday junction (HJ) complex. HJ DNA is sandwiched between 2 RuvA tetramers; dsDNA enters through RuvA and exits via RuvB. An RuvB hexamer assembles on each DNA strand where it exits the tetramer. Each RuvB hexamer is contacted by two RuvA subunits (via domain III) on 2 adjacent RuvB subunits; this complex drives branch migration. In the full resolvosome a probable DNA-RuvA(4)-RuvB(12)-RuvC(2) complex forms which resolves the HJ.

It is found in the cytoplasm. In terms of biological role, the RuvA-RuvB-RuvC complex processes Holliday junction (HJ) DNA during genetic recombination and DNA repair, while the RuvA-RuvB complex plays an important role in the rescue of blocked DNA replication forks via replication fork reversal (RFR). RuvA specifically binds to HJ cruciform DNA, conferring on it an open structure. The RuvB hexamer acts as an ATP-dependent pump, pulling dsDNA into and through the RuvAB complex. HJ branch migration allows RuvC to scan DNA until it finds its consensus sequence, where it cleaves and resolves the cruciform DNA. The sequence is that of Holliday junction branch migration complex subunit RuvA from Nitratidesulfovibrio vulgaris (strain DSM 19637 / Miyazaki F) (Desulfovibrio vulgaris).